Consider the following 67-residue polypeptide: MENGFVNFYDHVKGYGFIRRERGRDVFFRYDDFLFLGHDVDICKGILVRFKLEKTDKGFKAVAIQKV.

The CSD domain maps to 1–66; sequence MENGFVNFYD…KGFKAVAIQK (66 aa).

In terms of biological role, probable cold shock-like component of antiviral defense system retron Se72, composed of a non-coding RNA (ncRNA), a reverse transcriptase (RT) and this protein. Expression of retron Se72 confers protection against bacteriophage lambda. At multiplicity of infection (MOI) of 0.02 cultures slow growth when infected with lambda but do not collapse, at MOI 2 cultures enter growth stasis. The sequence is that of Retron Se72 cold shock-like protein from Salmonella heidelberg (strain 579083-10).